The sequence spans 592 residues: Pyruvate decarboxylase 3 (592 aa).

Substrate contacts are provided by aspartate 54 and histidine 141. A thiamine pyrophosphate binding region spans residues 419-501 (DSWFNCQKLK…FLINNGGYTI (83 aa)). Positions 469, 496, and 498 each coordinate Mg(2+). Glutamate 502 is a substrate binding site.

The protein belongs to the TPP enzyme family. In terms of assembly, homotetramer. It depends on a metal cation as a cofactor. Requires thiamine diphosphate as cofactor. In terms of tissue distribution, expressed at low levels in roots and shoots.

It carries out the reaction a 2-oxocarboxylate + H(+) = an aldehyde + CO2. This Arabidopsis thaliana (Mouse-ear cress) protein is Pyruvate decarboxylase 3 (PDC3).